The following is an 85-amino-acid chain: MAPPLSPGSRVLIGLIRVYQRLISPLLGPHCRFTPTCSSYGIEALRRFGVIKGSWLTVKRVLKCHPLHPGGDDPVPPGPFDTREH.

This sequence belongs to the UPF0161 family.

The protein resides in the cell inner membrane. In terms of biological role, could be involved in insertion of integral membrane proteins into the membrane. This Enterobacter sp. (strain 638) protein is Putative membrane protein insertion efficiency factor.